The primary structure comprises 374 residues: Resuscitation-promoting factor Rpf2 (374 aa).

The signal sequence occupies residues 1–40 (MAPHQKSRINRINSTRSVPLRLATGGVLATLLIGGVTAAA). One can recognise a G5 domain in the interval 210–290 (IDRVDNTEIT…PATISRGTKT (81 aa)). Residues 228–252 (PTYVDDPEAPAGDETVVEEGAPGTK) are disordered.

The protein belongs to the transglycosylase family. Rpf subfamily. Glycosylated; by Pmt, by at least mannose and galactose. Other unidentified sugars may also be present. Post-translationally, may be subject to proteolytic cleavage as multiple shorter forms are detected in gels. In terms of processing, at least 3 non-glycosylated protein isoforms of 35, 40 and 42 kDa are seen in gels.

Its subcellular location is the secreted. It localises to the cell surface. In terms of biological role, factor that stimulates resuscitation of dormant cells. Has peptidoglycan (PG) hydrolytic activity. Active in the pM concentration range. Has little to no effect on actively-growing cells. PG fragments could either directly activate the resuscitation pathway of dormant bacteria or serve as a substrate for endogenous Rpf, resulting in low molecular weight products with resuscitation activity. This is Resuscitation-promoting factor Rpf2 (rpf2) from Corynebacterium glutamicum (strain ATCC 13032 / DSM 20300 / JCM 1318 / BCRC 11384 / CCUG 27702 / LMG 3730 / NBRC 12168 / NCIMB 10025 / NRRL B-2784 / 534).